The following is a 71-amino-acid chain: DNA-directed RNA polymerases I, II, and III subunit RPABC5 (71 aa).

Cysteine 7, cysteine 10, cysteine 44, and cysteine 45 together coordinate Zn(2+).

Belongs to the archaeal Rpo10/eukaryotic RPB10 RNA polymerase subunit family. In terms of assembly, component of the RNA polymerase I (Pol I), RNA polymerase II (Pol II) and RNA polymerase III (Pol III) complexes consisting of at least 13, 12 and 17 subunits, respectively.

The protein resides in the nucleus. In terms of biological role, DNA-dependent RNA polymerase catalyzes the transcription of DNA into RNA using the four ribonucleoside triphosphates as substrates. Common component of RNA polymerases I, II and III which synthesize ribosomal RNA precursors, mRNA precursors and many functional non-coding RNAs, and a small RNAs, such as 5S rRNA and tRNAs, respectively. Pol II is the central component of the basal RNA polymerase II transcription machinery. Pols are composed of mobile elements that move relative to each other. In Pol II, RBP10 is part of the core element with the central large cleft. This chain is DNA-directed RNA polymerases I, II, and III subunit RPABC5, found in Brassica napus (Rape).